The primary structure comprises 225 residues: Cytidylate kinase (225 aa).

11 to 19 (GPAGVGKST) contacts ATP.

The protein belongs to the cytidylate kinase family. Type 1 subfamily.

Its subcellular location is the cytoplasm. It carries out the reaction CMP + ATP = CDP + ADP. It catalyses the reaction dCMP + ATP = dCDP + ADP. The polypeptide is Cytidylate kinase (Lawsonia intracellularis (strain PHE/MN1-00)).